The chain runs to 634 residues: tRNA uridine 5-carboxymethylaminomethyl modification enzyme MnmG (634 aa).

FAD is bound at residue 13 to 18; it reads GAGHAG. 273–287 lines the NAD(+) pocket; sequence GPRYCPSIEDKIIKF.

This sequence belongs to the MnmG family. Homodimer. Heterotetramer of two MnmE and two MnmG subunits. Requires FAD as cofactor.

Its subcellular location is the cytoplasm. NAD-binding protein involved in the addition of a carboxymethylaminomethyl (cmnm) group at the wobble position (U34) of certain tRNAs, forming tRNA-cmnm(5)s(2)U34. The polypeptide is tRNA uridine 5-carboxymethylaminomethyl modification enzyme MnmG (Buchnera aphidicola subsp. Cinara cedri (strain Cc)).